Consider the following 99-residue polypeptide: uncharacterized protein (99 aa).

It localises to the mitochondrion. This is an uncharacterized protein from Marchantia polymorpha (Common liverwort).